The sequence spans 520 residues: Polycomb protein PHO (520 aa).

4 consecutive C2H2-type zinc fingers follow at residues 357–381 (IACP…LHTH), 386–408 (HVCA…QLVH), 414–438 (FQCT…VRIH), and 444–468 (FVCP…ILTH). The interval 475 to 497 (TSISGKSGCSNAESNSQSEDTSA) is disordered.

In terms of assembly, component of the Esc/E(z) complex, composed of Esc, E(z), Su(z)12, HDAC1/Rpd3 and Caf1-55. This complex is distinct from the PRC1 complex, which contains many other PcG proteins like Pc, Ph, Psc, Su(z)2. The two complexes however cooperate and interact together during the first 3 hours of development to establish PcG silencing. Component of the chromatin remodeling Ino80 complex. Interacts with Sfmbt to form a pho-repressive complex (PhoRC).

Its subcellular location is the nucleus. Functionally, polycomb group (PcG) protein that binds to the 5'-CNGCCATNNNNG-3' sequence found in the regulatory regions of many genes. PcG proteins act by forming multiprotein complexes, which are required to maintain the transcriptionally repressive state of homeotic genes throughout development. PcG proteins are not required to initiate repression, but to maintain it during later stages of development. They probably act via the methylation of histones, rendering chromatin heritably changed in its expressibility. Probably targets the Esc/E(z) complex to DNA. Necessary but not sufficient to recruit a functional PcG repressive complex that represses target genes, suggesting that the recruitment of the distinct PRC1 complex is also required to allow a subsequent repression. In terms of biological role, proposed core component of the chromatin remodeling Ino80 complex which is involved in transcriptional regulation, DNA replication and probably DNA repair. In Drosophila melanogaster (Fruit fly), this protein is Polycomb protein PHO (pho).